We begin with the raw amino-acid sequence, 506 residues long: Alpha-L-arabinofuranosidase B (506 aa).

Positions 1-26 (MSSGLSLERACAVALGIVASASLVAA) are cleaved as a signal peptide. The interval 27–343 (GPCDIYSSGG…ADIVAAKYAI (317 aa)) is catalytic. 3 cysteine pairs are disulfide-bonded: C29–C39, C89–C94, and C184–C185. N91 is a glycosylation site (N-linked (GlcNAc...) asparagine). Residue D227 coordinates substrate. E229 serves as the catalytic Nucleophile. N230 and G304 together coordinate substrate. D305 functions as the Proton donor in the catalytic mechanism. The segment at 344–506 (ASLTSGPALT…VSWVVSTGFA (163 aa)) is ABD. A disulfide bridge links C409 with C447. Residues H424, N426, F427, D443, H471, E473, L476, and D496 each coordinate substrate.

Belongs to the glycosyl hydrolase 54 family.

It localises to the secreted. It catalyses the reaction Hydrolysis of terminal non-reducing alpha-L-arabinofuranoside residues in alpha-L-arabinosides.. It participates in glycan metabolism; L-arabinan degradation. In terms of biological role, alpha-L-arabinofuranosidase involved in the degradation of arabinoxylan, a major component of plant hemicellulose. Able to hydrolyze 1,5-, 1,3- and 1,2-alpha-linkages not only in L-arabinofuranosyl oligosaccharides, but also in polysaccharides containing terminal non-reducing L-arabinofuranoses in side chains, like L-arabinan, arabinogalactan and arabinoxylan. The polypeptide is Alpha-L-arabinofuranosidase B (abfB) (Aspergillus oryzae (strain ATCC 42149 / RIB 40) (Yellow koji mold)).